The chain runs to 452 residues: Glycine receptor subunit alpha-2 (452 aa).

The signal sequence occupies residues 1-27 (MNRQLVNILTALFAFFLGTNHFREAFC). Over 28–256 (KDHDSRSGKH…KFHLERQMGY (229 aa)) the chain is Extracellular. A glycan (N-linked (GlcNAc...) asparagine) is linked at asparagine 72. Residue arginine 99 participates in glycine binding. Arginine 99 lines the strychnine pocket. Asparagine 103 carries an N-linked (GlcNAc...) asparagine glycan. Serine 163 contributes to the glycine binding site. A disulfide bond links cysteine 172 and cysteine 186. The Zn(2+) site is built by glutamate 226 and glutamate 228. Cysteines 232 and 243 form a disulfide. Threonine 238 provides a ligand contact to glycine. Histidine 249 serves as a coordination point for Zn(2+). A helical membrane pass occupies residues 257–278 (YLIQMYIPSLLIVILSWVSFWI). At 279-283 (NMDAA) the chain is on the cytoplasmic side. The chain crosses the membrane as a helical span at residues 284–304 (PARVALGITTVLTMTTQSSGS). The Extracellular portion of the chain corresponds to 305–315 (RASLPKVSYVK). A helical membrane pass occupies residues 316-336 (AIDIWMAVCLLFVFAALLEYA). Topologically, residues 337-420 (AVNFVSRQHK…FVDRAKRIDT (84 aa)) are cytoplasmic. A helical membrane pass occupies residues 421-441 (ISRAAFPLAFLIFNIFYWITY). Topologically, residues 442 to 452 (KIIRHEDVHKK) are extracellular.

This sequence belongs to the ligand-gated ion channel (TC 1.A.9) family. Glycine receptor (TC 1.A.9.3) subfamily. GLRA2 sub-subfamily. As to quaternary structure, interacts with GLRB. Heteropentamer composed of GLRA2 and GLRB; functional GLRB-GLRA2 heteropentamers contain four GLRA2 subunits and one GLRB subunit, although alternative subunit composition cannot be excluded. Homopentamer (in vitro). Both homopentamers and heteropentamers form functional ion channels, but their characteristics are subtly different.

Its subcellular location is the postsynaptic cell membrane. The protein resides in the synapse. It is found in the cell membrane. The protein localises to the cell projection. The catalysed reaction is chloride(in) = chloride(out). Channel opening is triggered by extracellular glycine. Channel opening is also triggered by taurine and beta-alanine. Inhibited by strychnine. Inhibited by picrotoxin. Functionally, subunit of heteromeric glycine-gated chloride channels. Plays a role in synaptic plasticity. Contributes to the generation of inhibitory postsynaptic currents, and is involved in the down-regulation of neuronal excitability. Plays a role in cellular responses to ethanol. The polypeptide is Glycine receptor subunit alpha-2 (Rattus norvegicus (Rat)).